The chain runs to 289 residues: Polyamine aminopropyltransferase (289 aa).

One can recognise a PABS domain in the interval Pro-5–Leu-245. Residue Gln-36 coordinates S-methyl-5'-thioadenosine. Positions 67 and 91 each coordinate spermidine. Residues Asp-111 and Asp-143–Gly-144 each bind S-methyl-5'-thioadenosine. The active-site Proton acceptor is the Asp-164.

Belongs to the spermidine/spermine synthase family. As to quaternary structure, homodimer or homotetramer.

It localises to the cytoplasm. The enzyme catalyses S-adenosyl 3-(methylsulfanyl)propylamine + putrescine = S-methyl-5'-thioadenosine + spermidine + H(+). The protein operates within amine and polyamine biosynthesis; spermidine biosynthesis; spermidine from putrescine: step 1/1. In terms of biological role, catalyzes the irreversible transfer of a propylamine group from the amino donor S-adenosylmethioninamine (decarboxy-AdoMet) to putrescine (1,4-diaminobutane) to yield spermidine. The protein is Polyamine aminopropyltransferase of Pyrobaculum calidifontis (strain DSM 21063 / JCM 11548 / VA1).